The sequence spans 132 residues: Small ribosomal subunit protein uS8 (132 aa).

Belongs to the universal ribosomal protein uS8 family. As to quaternary structure, part of the 30S ribosomal subunit. Contacts proteins S5 and S12.

Functionally, one of the primary rRNA binding proteins, it binds directly to 16S rRNA central domain where it helps coordinate assembly of the platform of the 30S subunit. In Staphylococcus saprophyticus subsp. saprophyticus (strain ATCC 15305 / DSM 20229 / NCIMB 8711 / NCTC 7292 / S-41), this protein is Small ribosomal subunit protein uS8.